The following is an 823-amino-acid chain: Protein Shroom1 (823 aa).

Met-1 carries the N-acetylmethionine modification. 3 disordered regions span residues 1-55 (MEAL…TERL), 72-110 (PTSK…LNRQ), and 124-159 (ATAH…TSFQ). Polar residues-rich tracts occupy residues 28-50 (RADS…TPSP) and 72-85 (PTSK…TQRP). Ser-103, Ser-133, Ser-137, Ser-166, Ser-190, and Ser-224 each carry phosphoserine. The ASD1 domain maps to 145–233 (LQGAQRRVLR…SEPGKLHRVG (89 aa)). The interval 181 to 200 (TAHVRSASSSQELGEEEPAR) is disordered. Disordered stretches follow at residues 270 to 303 (SSTE…GPCK) and 349 to 375 (QTKP…PEDD). Thr-383 carries the phosphothreonine modification. Phosphoserine is present on Ser-385. Disordered stretches follow at residues 420–503 (LHET…LTWG) and 566–620 (EMGE…STQA). 3 stretches are compositionally biased toward polar residues: residues 444-468 (RPTS…TDPS), 489-503 (SETP…LTWG), and 586-620 (QDLQ…STQA). One can recognise an ASD2 domain in the interval 517–796 (EALVQELARL…QLDTIWSDLS (280 aa)).

This sequence belongs to the shroom family. As to quaternary structure, interacts with F-actin.

Its subcellular location is the cytoplasm. The protein localises to the cytoskeleton. Functionally, may be involved in the assembly of microtubule arrays during cell elongation. In Mus musculus (Mouse), this protein is Protein Shroom1 (Shroom1).